Reading from the N-terminus, the 160-residue chain is Small ribosomal subunit protein uS10m (160 aa).

It belongs to the universal ribosomal protein uS10 family. In terms of assembly, component of the mitochondrial ribosome small subunit (28S) which comprises a 12S rRNA and about 30 distinct proteins.

It localises to the mitochondrion. This is Small ribosomal subunit protein uS10m (Mrps10) from Mus musculus (Mouse).